We begin with the raw amino-acid sequence, 537 residues long: Glucans biosynthesis protein D 2 (537 aa).

Positions 1-28 (MVTRRHLLASASLSATLAALGITPEALA) form a signal peptide, tat-type signal.

The protein belongs to the OpgD/OpgG family. Predicted to be exported by the Tat system. The position of the signal peptide cleavage has not been experimentally proven.

It is found in the periplasm. The protein operates within glycan metabolism; osmoregulated periplasmic glucan (OPG) biosynthesis. In terms of biological role, probably involved in the control of the structural glucose backbone of osmoregulated periplasmic glucans (OPGs). This chain is Glucans biosynthesis protein D 2 (opgD2), found in Ralstonia nicotianae (strain ATCC BAA-1114 / GMI1000) (Ralstonia solanacearum).